Here is a 694-residue protein sequence, read N- to C-terminus: Elongation factor G (694 aa).

Positions 6–288 constitute a tr-type G domain; it reads KLYRNIGIAA…GVIEYLPSPT (283 aa). Residues 15 to 22, 86 to 90, and 140 to 143 contribute to the GTP site; these read AHVDAGKT, DTPGH, and NKMD.

This sequence belongs to the TRAFAC class translation factor GTPase superfamily. Classic translation factor GTPase family. EF-G/EF-2 subfamily.

The protein localises to the cytoplasm. Functionally, catalyzes the GTP-dependent ribosomal translocation step during translation elongation. During this step, the ribosome changes from the pre-translocational (PRE) to the post-translocational (POST) state as the newly formed A-site-bound peptidyl-tRNA and P-site-bound deacylated tRNA move to the P and E sites, respectively. Catalyzes the coordinated movement of the two tRNA molecules, the mRNA and conformational changes in the ribosome. The polypeptide is Elongation factor G (Legionella pneumophila (strain Paris)).